The sequence spans 198 residues: Nucleoid occlusion factor SlmA (198 aa).

Residues 9-70 (RNRREEILQA…SLIEFIEDSL (62 aa)) enclose the HTH tetR-type domain. The H-T-H motif DNA-binding region spans 33-52 (TTAKLAANVGVSEAALYRHF). A coiled-coil region spans residues 119-144 (DRLQGRINQLFERIEMQLRQVLREKK).

It belongs to the nucleoid occlusion factor SlmA family. Homodimer. Interacts with FtsZ.

The protein resides in the cytoplasm. It is found in the nucleoid. Functionally, required for nucleoid occlusion (NO) phenomenon, which prevents Z-ring formation and cell division over the nucleoid. Acts as a DNA-associated cell division inhibitor that binds simultaneously chromosomal DNA and FtsZ, and disrupts the assembly of FtsZ polymers. SlmA-DNA-binding sequences (SBS) are dispersed on non-Ter regions of the chromosome, preventing FtsZ polymerization at these regions. The chain is Nucleoid occlusion factor SlmA from Yersinia pseudotuberculosis serotype I (strain IP32953).